The chain runs to 490 residues: MEDSASASLSSAAATGTSTSTPAAPTARKQLDKEQVRKAVDALLTHCKSRKNNYGLLLNENESLFLMVVLWKIPSKELRVRLTLPHSIRSDSEDICLFTKDEPNSTPEKTEQFYRKLLNKHGIKTVSQIISLQTLKKEYKSYEAKLRLLSSFDFFLTDARIRRLLPSLIGRHFYQRKKVPVSVNLLSKNLSREINDCIGGTVLNISKSGSCSAIRIGHVGMQIEHIIENIVAVTKGLSEKLPEKWESVKLLFVKTEKSAALPIFSSFVSNWDEATKRSLLNKKKKEARRKRRERNFEKQKERKKKRQQARKTASVLSKDDVAPESGDTTVKKPESKKEQTPEHGKKKRGRGKAQVKATNESEDEIPQLVPIGKKTPANEKVEIQKHATGKKSPAKSPNPSTPRGKKRKALPASETPKAAESETPGKSPEKKPKIKEEAVKEKSPSLGKKDARQTPKKPEAKFFTTPSKSVRKASHTPKKWPKKPKVPQST.

M1 is modified (N-acetylmethionine). Residues 1–27 (MEDSASASLSSAAATGTSTSTPAAPTA) show a composition bias toward low complexity. The interval 1–33 (MEDSASASLSSAAATGTSTSTPAAPTARKQLDK) is disordered. Glycyl lysine isopeptide (Lys-Gly) (interchain with G-Cter in SUMO2) cross-links involve residues K120 and K254. Residues 280 to 293 (LNKKKKEARRKRRE) show a composition bias toward basic residues. The stretch at 280 to 313 (LNKKKKEARRKRRERNFEKQKERKKKRQQARKTA) forms a coiled coil. The tract at residues 280-490 (LNKKKKEARR…PKKPKVPQST (211 aa)) is disordered. A compositionally biased stretch (basic and acidic residues) spans 329 to 343 (TVKKPESKKEQTPEH). A Phosphothreonine modification is found at T340. The span at 344–353 (GKKKRGRGKA) shows a compositional bias: basic residues. T358 is modified (phosphothreonine). S361 carries the phosphoserine modification. T375 is modified (phosphothreonine). Basic and acidic residues predominate over residues 376 to 385 (PANEKVEIQK). A Glycyl lysine isopeptide (Lys-Gly) (interchain with G-Cter in SUMO2) cross-link involves residue K380. Phosphoserine occurs at positions 392 and 396. Phosphothreonine is present on residues T415 and T423. Phosphoserine is present on S427. The span at 427-460 (SPEKKPKIKEEAVKEKSPSLGKKDARQTPKKPEA) shows a compositional bias: basic and acidic residues. Residue K435 forms a Glycyl lysine isopeptide (Lys-Gly) (interchain with G-Cter in SUMO2) linkage. S443 carries the phosphoserine modification. K461 participates in a covalent cross-link: Glycyl lysine isopeptide (Lys-Gly) (interchain with G-Cter in SUMO2). At T465 the chain carries Phosphothreonine. K468 is modified (N6-acetyllysine). A Phosphoserine modification is found at S469. Residues 469–490 (SVRKASHTPKKWPKKPKVPQST) show a composition bias toward basic residues.

The protein belongs to the universal ribosomal protein uL1 family. Highly divergent. Interacts with ING1 (isoform 2). Interacts with KPNA7 and KPNA2. In terms of tissue distribution, expressed at high intensities in the heart, skeletal muscle, and placenta.

The protein localises to the nucleus. Its subcellular location is the nucleolus. Its function is as follows. Regulates cellular senescence through inhibition of PTEN translation. Acts as a pro-apoptotic regulator in response to DNA damage. The sequence is that of Ribosomal L1 domain-containing protein 1 (RSL1D1) from Homo sapiens (Human).